A 440-amino-acid chain; its full sequence is MANGFSTSPRRPILHHSPRFNLGSSSRLFCESTPIFIGTIPLHCPKGTCPPAQSHGHSSLRTNLNSSPPRCPQNPGTEPSLQPLGKVLQCGLSRGLHETLKVLQTPREELPLQISSQLPTSPSRLQSVPTSQHKPAYREAILHPRLPDVFYAAPNLRFVRKLPKPSQSVRQPRRSSRKLNDRLVSKPRSVSVLNPQVDSPLHTRRALSRQLQSARQRPRLAENLCDPNSIPEPVRVRPGILGPSPFPSYREELSNTKSRFSEDKGSDFLPNPPSSNSSEPGLPGRPSQAPSCASENLRRPLHLHSSNPNSPHFRSRWIRKNSVKQARVQLGHISSLGQSPNLRPLDSLLQASRVLHATSVSSYKTQGASHEECFKTRSDGITSSHSGHLHHNDRVEHQLQQGPLLQCSQDSLAEPTYRPGTPSLPNFCIAAKELSSTQPS.

Disordered regions lie at residues 49–81 (CPPA…EPSL) and 162–295 (LPKP…CASE). Residues 55-80 (HGHSSLRTNLNSSPPRCPQNPGTEPS) are compositionally biased toward polar residues. The segment covering 249–266 (YREELSNTKSRFSEDKGS) has biased composition (basic and acidic residues). Low complexity predominate over residues 274-284 (SSNSSEPGLPG).

This sequence belongs to the tymoviridae protein p69 family.

This is an uncharacterized protein from Erysimum latent virus (ELV).